A 300-amino-acid polypeptide reads, in one-letter code: Elongator complex protein 5 (300 aa).

Ser-252 is modified (phosphoserine). Positions 264–300 are disordered; the sequence is QQALLRPRPGQATSHIFYEPDAYDDLDQEDPDDDLDI. Acidic residues predominate over residues 284 to 300; the sequence is DAYDDLDQEDPDDDLDI.

The protein belongs to the ELP5 family. As to quaternary structure, component of the elongator complex which consists of ELP1, ELP2, ELP3, ELP4, ELP5 and ELP6; in the complex, is required for optimal binding of ELP3 to ELP4. Post-translationally, tyrosine-phosphorylated. As to expression, ubiquitously expressed with high levels in heart, brain, liver, skeletal muscle and testis.

It localises to the nucleus. It is found in the cytoplasm. It functions in the pathway tRNA modification; 5-methoxycarbonylmethyl-2-thiouridine-tRNA biosynthesis. In terms of biological role, component of the elongator complex which is required for multiple tRNA modifications, including mcm5U (5-methoxycarbonylmethyl uridine), mcm5s2U (5-methoxycarbonylmethyl-2-thiouridine), and ncm5U (5-carbamoylmethyl uridine). The elongator complex catalyzes formation of carboxymethyluridine in the wobble base at position 34 in tRNAs. Involved in cell migration. The chain is Elongator complex protein 5 from Homo sapiens (Human).